Reading from the N-terminus, the 199-residue chain is uncharacterized protein (199 aa).

Transmembrane regions (helical) follow at residues 40–60 (LLIC…FCFL), 86–106 (VLTG…TFPF), 117–137 (TSWP…LTSS), and 166–186 (FLLA…ALIL).

The protein resides in the membrane. This is an uncharacterized protein from Saccharomyces cerevisiae (strain ATCC 204508 / S288c) (Baker's yeast).